Consider the following 312-residue polypeptide: MAAAQHRPVMLEEAVRALAPSGGDVVVDATFGGGGHSARVLRELGPGGRVVGIDRDPEARGRAERLLGDPRFSFEQGPYDEVLWRMVGRGERADALLFDLGLSSFQVDDPRRGFSYTREGPLDMRMDPGSGPSAADFLNAAGEAEIAGVLSEYGDVPRAQARRVAREILRRRPLRTTADLREAVRAAVGWAPRGGNPAKRVFQAVRIRVNDELGGLRRALEAAERLLVPGGRLVVISFHSGEDRLVKRFIAEREGRCTCPPELPVCVCGARPVFRRGPVLRPSEREVAENPRSAPARMRVAFRTAEPAREAS.

S-adenosyl-L-methionine-binding positions include 34-36 (GGH), aspartate 54, leucine 83, aspartate 99, and glutamine 106.

The protein belongs to the methyltransferase superfamily. RsmH family.

It localises to the cytoplasm. The catalysed reaction is cytidine(1402) in 16S rRNA + S-adenosyl-L-methionine = N(4)-methylcytidine(1402) in 16S rRNA + S-adenosyl-L-homocysteine + H(+). Specifically methylates the N4 position of cytidine in position 1402 (C1402) of 16S rRNA. In Rubrobacter xylanophilus (strain DSM 9941 / JCM 11954 / NBRC 16129 / PRD-1), this protein is Ribosomal RNA small subunit methyltransferase H.